A 286-amino-acid polypeptide reads, in one-letter code: MIYQTDNDKLYRYLFKDRAVRGEWVRLNKTFTDTLNSHEYPRIVRNLLGEMMVATNLLTATLKFKGNITIQIQGNGPLKLLLVNGSDSQQIRALARLQDDVYDDMTLSELVGNGILVITIAPTNGERYQGVIALDKPTIAECLEDYFIRSEQLQTQLLIRSGEYEGKPVAAGLLLQIMPDGTGSQEDFEHLATLAATVKDEELFGLTAENLLYRLYHEETVEIYPPSAVEFHCGCSLERSGSALLLISDDEIENILTEHGGSIDMQCECCGTHYFFDKKTIEKLKA.

2 disulfide bridges follow: Cys-233–Cys-235 and Cys-267–Cys-270.

It belongs to the HSP33 family. Post-translationally, under oxidizing conditions two disulfide bonds are formed involving the reactive cysteines. Under reducing conditions zinc is bound to the reactive cysteines and the protein is inactive.

Its subcellular location is the cytoplasm. Functionally, redox regulated molecular chaperone. Protects both thermally unfolding and oxidatively damaged proteins from irreversible aggregation. Plays an important role in the bacterial defense system toward oxidative stress. The chain is 33 kDa chaperonin from Histophilus somni (strain 129Pt) (Haemophilus somnus).